The sequence spans 203 residues: Endo-type membrane-bound lytic murein transglycosylase A (203 aa).

Residues 1–15 (MKLRWLLILVVFLAG) form the signal peptide. Residue Cys-16 is the site of N-palmitoyl cysteine attachment. Cys-16 carries the S-diacylglycerol cysteine lipid modification.

This sequence belongs to the transglycosylase Slt family.

It is found in the cell outer membrane. It catalyses the reaction Endolytic cleavage of the (1-&gt;4)-beta-glycosidic linkage between N-acetylmuramic acid (MurNAc) and N-acetylglucosamine (GlcNAc) residues in peptidoglycan with concomitant formation of a 1,6-anhydrobond in the MurNAc residue.. Its function is as follows. Murein-degrading enzyme. May play a role in recycling of muropeptides during cell elongation and/or cell division. Preferentially cleaves at a distance of more than two disaccharide units from the ends of the glycan chain. In Klebsiella pneumoniae (strain 342), this protein is Endo-type membrane-bound lytic murein transglycosylase A.